A 218-amino-acid chain; its full sequence is Glutathione S-transferase Mu 4 (218 aa).

One can recognise a GST N-terminal domain in the interval 2 to 88; the sequence is SMTLGYWDIR…YIARKHNLCG (87 aa). Glutathione is bound by residues 7–8, 46–50, 59–60, and 72–73; these read YW, WLNEK, NL, and QS. The region spanning 90–208 is the GST C-terminal domain; it reads TEEEKIRVDI…KSSRFLPKPL (119 aa). Residue Tyr116 participates in substrate binding.

The protein belongs to the GST superfamily. Mu family. As to quaternary structure, homodimer. As to expression, expressed in a wide variety of tissues.

It is found in the cytoplasm. It catalyses the reaction RX + glutathione = an S-substituted glutathione + a halide anion + H(+). The catalysed reaction is 1-chloro-2,4-dinitrobenzene + glutathione = 2,4-dinitrophenyl-S-glutathione + chloride + H(+). The enzyme catalyses (13S,14S)-epoxy-(4Z,7Z,9E,11E,16Z,19Z)-docosahexaenoate + glutathione = (13R)-S-glutathionyl-(14S)-hydroxy-(4Z,7Z,9E,11E,16Z,19Z)-docosahexaenoate. It carries out the reaction leukotriene C4 = leukotriene A4 + glutathione. In terms of biological role, conjugation of reduced glutathione to a wide number of exogenous and endogenous hydrophobic electrophiles. Catalyzes the conjugation of leukotriene A4 with reduced glutathione (GSH) to form leukotriene C4. Can also catalyze the transfer of a glutathionyl group from glutathione (GSH) to 13(S),14(S)-epoxy-docosahexaenoic acid to form maresin conjugate in tissue regeneration 1 (MCTR1), a bioactive lipid mediator that possess potent anti-inflammatory and proresolving actions. The protein is Glutathione S-transferase Mu 4 (GSTM4) of Homo sapiens (Human).